The sequence spans 833 residues: Phenylalanine--tRNA ligase beta subunit (833 aa).

The tRNA-binding domain maps to 42–157 (ADLKGPLAVG…PEYEVGTDAI (116 aa)). Residues 411–485 (SAPHTITIPA…RLEGYENLPS (75 aa)) enclose the B5 domain. Mg(2+) contacts are provided by Asp463, Asp469, Glu472, and Glu473. Positions 739-832 (STFPVATQDV…AAERTGAALR (94 aa)) constitute an FDX-ACB domain.

The protein belongs to the phenylalanyl-tRNA synthetase beta subunit family. Type 1 subfamily. As to quaternary structure, tetramer of two alpha and two beta subunits. It depends on Mg(2+) as a cofactor.

It is found in the cytoplasm. The enzyme catalyses tRNA(Phe) + L-phenylalanine + ATP = L-phenylalanyl-tRNA(Phe) + AMP + diphosphate + H(+). The polypeptide is Phenylalanine--tRNA ligase beta subunit (Streptomyces avermitilis (strain ATCC 31267 / DSM 46492 / JCM 5070 / NBRC 14893 / NCIMB 12804 / NRRL 8165 / MA-4680)).